The primary structure comprises 54 residues: Ovomucoid (54 aa).

The region spanning 4-54 is the Kazal-like domain; sequence VDCSEYPKPACTMEHRPLCGSDNQTYDNKCNFCNAVVESNGTLTLSHFGKC. Disulfide bonds link cysteine 6–cysteine 36, cysteine 14–cysteine 33, and cysteine 22–cysteine 54. Asparagine 43 carries an N-linked (GlcNAc...) asparagine glycan.

The protein localises to the secreted. In Guttera pucherani (Eastern crested guineafowl), this protein is Ovomucoid.